The sequence spans 159 residues: Phosphopantetheine adenylyltransferase (159 aa).

Thr10 contributes to the substrate binding site. ATP contacts are provided by residues 10-11 and His18; that span reads TF. Residues Lys42, Leu74, and Arg88 each coordinate substrate. ATP-binding positions include 89 to 91, Glu99, and 124 to 130; these read GLR and YAFISSS.

This sequence belongs to the bacterial CoaD family. In terms of assembly, homohexamer. It depends on Mg(2+) as a cofactor.

It localises to the cytoplasm. It catalyses the reaction (R)-4'-phosphopantetheine + ATP + H(+) = 3'-dephospho-CoA + diphosphate. It participates in cofactor biosynthesis; coenzyme A biosynthesis; CoA from (R)-pantothenate: step 4/5. Its function is as follows. Reversibly transfers an adenylyl group from ATP to 4'-phosphopantetheine, yielding dephospho-CoA (dPCoA) and pyrophosphate. The polypeptide is Phosphopantetheine adenylyltransferase (Hydrogenovibrio crunogenus (strain DSM 25203 / XCL-2) (Thiomicrospira crunogena)).